A 436-amino-acid chain; its full sequence is Serine--tRNA ligase (436 aa).

Position 242–244 (242–244 (TAE)) interacts with L-serine. Position 273 to 275 (273 to 275 (RSE)) interacts with ATP. Glu296 contacts L-serine. 360-363 (EISS) is an ATP binding site. Ser395 serves as a coordination point for L-serine.

This sequence belongs to the class-II aminoacyl-tRNA synthetase family. Type-1 seryl-tRNA synthetase subfamily. Homodimer. The tRNA molecule binds across the dimer.

The protein localises to the cytoplasm. It catalyses the reaction tRNA(Ser) + L-serine + ATP = L-seryl-tRNA(Ser) + AMP + diphosphate + H(+). The catalysed reaction is tRNA(Sec) + L-serine + ATP = L-seryl-tRNA(Sec) + AMP + diphosphate + H(+). The protein operates within aminoacyl-tRNA biosynthesis; selenocysteinyl-tRNA(Sec) biosynthesis; L-seryl-tRNA(Sec) from L-serine and tRNA(Sec): step 1/1. In terms of biological role, catalyzes the attachment of serine to tRNA(Ser). Is also able to aminoacylate tRNA(Sec) with serine, to form the misacylated tRNA L-seryl-tRNA(Sec), which will be further converted into selenocysteinyl-tRNA(Sec). The polypeptide is Serine--tRNA ligase (Polynucleobacter necessarius subsp. necessarius (strain STIR1)).